The sequence spans 446 residues: Coiled-coil domain-containing protein 112 (446 aa).

2 coiled-coil regions span residues 35–116 (KTER…RKID) and 219–400 (ERKK…NVSR). Disordered regions lie at residues 253–272 (FHNK…KKQK) and 390–430 (LKEK…LLHI). Residues 255-268 (NKQEDNQKQKEEQR) are compositionally biased toward basic and acidic residues.

It localises to the cytoplasm. Its subcellular location is the cytoskeleton. The protein localises to the microtubule organizing center. The protein resides in the centrosome. It is found in the centriolar satellite. The polypeptide is Coiled-coil domain-containing protein 112 (CCDC112) (Homo sapiens (Human)).